Consider the following 45-residue polypeptide: Large ribosomal subunit protein bL34 (45 aa).

A disordered region spans residues 1 to 45 (MTKRTFGGTSRKRKRVSGFRVRMRSHTGRRVVRTRRKRGRSRLTV). The span at 10–45 (SRKRKRVSGFRVRMRSHTGRRVVRTRRKRGRSRLTV) shows a compositional bias: basic residues.

This sequence belongs to the bacterial ribosomal protein bL34 family.

This is Large ribosomal subunit protein bL34 from Prochlorococcus marinus (strain NATL2A).